We begin with the raw amino-acid sequence, 378 residues long: Dihydroorotate dehydrogenase (quinone) (378 aa).

FMN is bound by residues 77–81 (AGFDK) and Thr-101. Lys-81 is a substrate binding site. A substrate-binding site is contributed by 126–130 (NRMGF). Residues Asn-158 and Asn-191 each contribute to the FMN site. Asn-191 lines the substrate pocket. Ser-194 acts as the Nucleophile in catalysis. Asn-196 contacts substrate. FMN is bound by residues Lys-229 and Thr-257. 258-259 (NT) lines the substrate pocket. FMN contacts are provided by residues Gly-287, Gly-316, and 337 to 338 (YT).

It belongs to the dihydroorotate dehydrogenase family. Type 2 subfamily. As to quaternary structure, monomer. FMN is required as a cofactor.

Its subcellular location is the cell membrane. It catalyses the reaction (S)-dihydroorotate + a quinone = orotate + a quinol. It functions in the pathway pyrimidine metabolism; UMP biosynthesis via de novo pathway; orotate from (S)-dihydroorotate (quinone route): step 1/1. In terms of biological role, catalyzes the conversion of dihydroorotate to orotate with quinone as electron acceptor. In Synechococcus elongatus (strain ATCC 33912 / PCC 7942 / FACHB-805) (Anacystis nidulans R2), this protein is Dihydroorotate dehydrogenase (quinone).